Here is a 231-residue protein sequence, read N- to C-terminus: Urease accessory protein UreF (231 aa).

This sequence belongs to the UreF family. In terms of assembly, ureD, UreF and UreG form a complex that acts as a GTP-hydrolysis-dependent molecular chaperone, activating the urease apoprotein by helping to assemble the nickel containing metallocenter of UreC. The UreE protein probably delivers the nickel.

It localises to the cytoplasm. Functionally, required for maturation of urease via the functional incorporation of the urease nickel metallocenter. In Magnetococcus marinus (strain ATCC BAA-1437 / JCM 17883 / MC-1), this protein is Urease accessory protein UreF.